The sequence spans 248 residues: MEDPEKKLNQKSDGKPRKVRFKISSSYSGRVLKQVFEDGQELESPKEEYPHSFLQESLETMDGVYGSGEVPRPQMCSPKLTAQRISVFREGNAYTLAGGQPRFNDYKANDHKPLPIIDFGKIIIYTNNLKIIRTPMDKRDFVRKILQKEEEAEEESLMNKEESYGGRDQHDRPLVEAESTLPQNRYTQEGDIPEDSCFHCRGSGSATCSLCHGSKFSMLANRFKESYRALRCPACNENGLQPCQICNQ.

Composition is skewed to basic and acidic residues over residues 1-16 and 157-172; these read MEDPEKKLNQKSDGKP and LMNKEESYGGRDQHDR. 2 disordered regions span residues 1–20 and 150–172; these read MEDPEKKLNQKSDGKPRKVR and EEAEEESLMNKEESYGGRDQHDR.

Belongs to the GRXCR2 family. As to quaternary structure, interacts with TPRN; the interaction restricts TPRN to the stereocilum basal region.

The protein resides in the cell projection. It is found in the stereocilium. Its function is as follows. Required for hearing. Plays a role in maintaining cochlear stereocilia bundles that are involved in sound detection. Ensures the restriction of TPRN to the basal region of stereocilia in hair cells. The chain is Glutaredoxin domain-containing cysteine-rich protein 2 (GRXCR2) from Homo sapiens (Human).